The chain runs to 227 residues: Esterase OVCA2 (227 aa).

Active-site charge relay system residues include serine 120, aspartate 180, and histidine 207.

This sequence belongs to the LovG family.

It carries out the reaction a carboxylic ester + H2O = an alcohol + a carboxylate + H(+). Its function is as follows. Exhibits ester hydrolase activity with a strong preference for long-chain alkyl ester substrates and high selectivity against a variety of short, branched, and substituted esters. Is able to hydrolyze ester bonds within a wide range of p-nitrophenyl derivatives (C2-C14) in vitro, with a strong preference toward substrates of &gt;8 carbons. This Danio rerio (Zebrafish) protein is Esterase OVCA2 (ovca2).